Here is a 236-residue protein sequence, read N- to C-terminus: Orotidine 5'-phosphate decarboxylase (236 aa).

Substrate contacts are provided by residues aspartate 14, lysine 36, aspartate 63–threonine 72, threonine 122, arginine 183, glutamine 192, glycine 212, and arginine 213. Lysine 65 (proton donor) is an active-site residue.

It belongs to the OMP decarboxylase family. Type 1 subfamily. In terms of assembly, homodimer.

The catalysed reaction is orotidine 5'-phosphate + H(+) = UMP + CO2. The protein operates within pyrimidine metabolism; UMP biosynthesis via de novo pathway; UMP from orotate: step 2/2. Catalyzes the decarboxylation of orotidine 5'-monophosphate (OMP) to uridine 5'-monophosphate (UMP). This is Orotidine 5'-phosphate decarboxylase from Halorhodospira halophila (strain DSM 244 / SL1) (Ectothiorhodospira halophila (strain DSM 244 / SL1)).